The sequence spans 229 residues: Deoxyribose-phosphate aldolase (229 aa).

Residue Asp84 is the Proton donor/acceptor of the active site. Lys146 acts as the Schiff-base intermediate with acetaldehyde in catalysis. Residue Lys188 is the Proton donor/acceptor of the active site.

The protein belongs to the DeoC/FbaB aldolase family. DeoC type 1 subfamily.

It is found in the cytoplasm. It carries out the reaction 2-deoxy-D-ribose 5-phosphate = D-glyceraldehyde 3-phosphate + acetaldehyde. It participates in carbohydrate degradation; 2-deoxy-D-ribose 1-phosphate degradation; D-glyceraldehyde 3-phosphate and acetaldehyde from 2-deoxy-alpha-D-ribose 1-phosphate: step 2/2. Catalyzes a reversible aldol reaction between acetaldehyde and D-glyceraldehyde 3-phosphate to generate 2-deoxy-D-ribose 5-phosphate. The chain is Deoxyribose-phosphate aldolase from Pyrobaculum neutrophilum (strain DSM 2338 / JCM 9278 / NBRC 100436 / V24Sta) (Thermoproteus neutrophilus).